The sequence spans 123 residues: WAP four-disulfide core domain protein 2 (123 aa).

The signal sequence occupies residues 1–28 (MPASRLVPLGAVLLLGLLLLLELPPVTG). 2 consecutive WAP domains span residues 30–71 (GADK…SAIC) and 74–122 (PNEK…VTPN). 8 disulfide bridges follow: Cys37-Cys63, Cys46-Cys67, Cys50-Cys62, Cys56-Cys71, Cys81-Cys109, Cys92-Cys113, Cys96-Cys108, and Cys102-Cys118. N-linked (GlcNAc...) asparagine glycosylation is present at Asn45.

In terms of assembly, homotrimer; disulfide-linked. In terms of tissue distribution, epididymis.

The protein localises to the secreted. In terms of biological role, broad range protease inhibitor. This is WAP four-disulfide core domain protein 2 (WFDC2) from Oryctolagus cuniculus (Rabbit).